A 444-amino-acid polypeptide reads, in one-letter code: MSELSPHSPFSVTELNRQVRRLLEVSFMQVWVTGEISNFSCPSSGHWYFSLKDDKAQVRCAMFRNRNMFVKQRPRDGEAVTLRAKVSLYEGRGEFQLIAESMELAGEGELRRAFEELKLKLSREGLFEESRKRPLPAMPKQVGVITSPTGAAVRDILTVLERRFPAIPVLLFPVPVQGKEAGPAIVAAIASANRLNCCDVLIVGRGGGSLEDLWAFNEEPVARAIAASAIPVVSAVGHETDITIADLVADLRAPTPSAAAEKVSPDQAEWKHRFLIYEQRLDAAAQRLLRQEGLRLNQLRGRLKHPGRRLQESAQRLDDLEVRLHRQAQNLLSVRRNQLTHLRDRLLASSPRQSLKNRYATVDALNHRLQTAVLSVLRHKSQHFAKLCGHMEAVSPIATLARGYAIVSDENGQIIRSEKEVRTGQKVKARLSDGEIHCEVVASV.

Belongs to the XseA family. Heterooligomer composed of large and small subunits.

It localises to the cytoplasm. It catalyses the reaction Exonucleolytic cleavage in either 5'- to 3'- or 3'- to 5'-direction to yield nucleoside 5'-phosphates.. Functionally, bidirectionally degrades single-stranded DNA into large acid-insoluble oligonucleotides, which are then degraded further into small acid-soluble oligonucleotides. This is Exodeoxyribonuclease 7 large subunit from Hahella chejuensis (strain KCTC 2396).